A 149-amino-acid polypeptide reads, in one-letter code: Protein-export protein SecB (149 aa).

The protein belongs to the SecB family. Homotetramer, a dimer of dimers. One homotetramer interacts with 1 SecA dimer.

The protein localises to the cytoplasm. In terms of biological role, one of the proteins required for the normal export of preproteins out of the cell cytoplasm. It is a molecular chaperone that binds to a subset of precursor proteins, maintaining them in a translocation-competent state. It also specifically binds to its receptor SecA. In Acidithiobacillus ferrooxidans (strain ATCC 23270 / DSM 14882 / CIP 104768 / NCIMB 8455) (Ferrobacillus ferrooxidans (strain ATCC 23270)), this protein is Protein-export protein SecB.